The primary structure comprises 528 residues: Peptide chain release factor 3 (528 aa).

The tr-type G domain maps to 10-278; it reads DRRRTFGIIS…AFVQMAPPPH (269 aa). Residues 19 to 26, 87 to 91, and 141 to 144 contribute to the GTP site; these read SHPDAGKT, DTPGH, and NKLD.

This sequence belongs to the TRAFAC class translation factor GTPase superfamily. Classic translation factor GTPase family. PrfC subfamily.

It is found in the cytoplasm. Increases the formation of ribosomal termination complexes and stimulates activities of RF-1 and RF-2. It binds guanine nucleotides and has strong preference for UGA stop codons. It may interact directly with the ribosome. The stimulation of RF-1 and RF-2 is significantly reduced by GTP and GDP, but not by GMP. This is Peptide chain release factor 3 from Syntrophobacter fumaroxidans (strain DSM 10017 / MPOB).